The primary structure comprises 64 residues: Ferredoxin-like protein in nif region (64 aa).

The 4Fe-4S ferredoxin-type domain maps to 2–30; it reads AFKIIASQCTQCGACEFECPSNAIELKGE. The [4Fe-4S] cluster site is built by cysteine 10, cysteine 13, cysteine 16, cysteine 20, cysteine 39, cysteine 42, cysteine 51, and cysteine 55.

[4Fe-4S] cluster is required as a cofactor.

This is Ferredoxin-like protein in nif region (fdxN) from Sinorhizobium fredii (strain NBRC 101917 / NGR234).